A 388-amino-acid chain; its full sequence is Alanine racemase 1 (388 aa).

The active-site Proton acceptor; specific for D-alanine is the Lys-40. Lys-40 is modified (N6-(pyridoxal phosphate)lysine). Arg-138 contributes to the substrate binding site. Tyr-268 serves as the catalytic Proton acceptor; specific for L-alanine. Met-316 contacts substrate.

Belongs to the alanine racemase family. Pyridoxal 5'-phosphate is required as a cofactor.

The enzyme catalyses L-alanine = D-alanine. Its pathway is amino-acid biosynthesis; D-alanine biosynthesis; D-alanine from L-alanine: step 1/1. Functionally, catalyzes the interconversion of L-alanine and D-alanine. May also act on other amino acids. In Caldanaerobacter subterraneus subsp. tengcongensis (strain DSM 15242 / JCM 11007 / NBRC 100824 / MB4) (Thermoanaerobacter tengcongensis), this protein is Alanine racemase 1 (alr1).